The following is a 368-amino-acid chain: Peptide chain release factor 2 (368 aa).

Gln251 carries the N5-methylglutamine modification.

Belongs to the prokaryotic/mitochondrial release factor family. Post-translationally, methylated by PrmC. Methylation increases the termination efficiency of RF2.

It is found in the cytoplasm. Peptide chain release factor 2 directs the termination of translation in response to the peptide chain termination codons UGA and UAA. This is Peptide chain release factor 2 from Nitratiruptor sp. (strain SB155-2).